Reading from the N-terminus, the 84-residue chain is Small ribosomal subunit protein uS17 (84 aa).

It belongs to the universal ribosomal protein uS17 family. Part of the 30S ribosomal subunit.

One of the primary rRNA binding proteins, it binds specifically to the 5'-end of 16S ribosomal RNA. The polypeptide is Small ribosomal subunit protein uS17 (Nitrosomonas europaea (strain ATCC 19718 / CIP 103999 / KCTC 2705 / NBRC 14298)).